Reading from the N-terminus, the 155-residue chain is RNA pyrophosphohydrolase (155 aa).

The Nudix hydrolase domain occupies 5-149; it reads EYRSGVGIML…KKPLYEKILS (145 aa). Positions 39 to 60 match the Nudix box motif; the sequence is GGLEAKETPEVGVLRELEEETG.

Belongs to the Nudix hydrolase family. RppH subfamily. A divalent metal cation serves as cofactor.

Accelerates the degradation of transcripts by removing pyrophosphate from the 5'-end of triphosphorylated RNA, leading to a more labile monophosphorylated state that can stimulate subsequent ribonuclease cleavage. The protein is RNA pyrophosphohydrolase of Zymomonas mobilis subsp. mobilis (strain ATCC 31821 / ZM4 / CP4).